Consider the following 150-residue polypeptide: Ribosome maturation factor RimP (150 aa).

The protein belongs to the RimP family.

The protein resides in the cytoplasm. In terms of biological role, required for maturation of 30S ribosomal subunits. The protein is Ribosome maturation factor RimP of Thermotoga neapolitana (strain ATCC 49049 / DSM 4359 / NBRC 107923 / NS-E).